We begin with the raw amino-acid sequence, 160 residues long: Ureidoglycolate lyase (160 aa).

It belongs to the ureidoglycolate lyase family. In terms of assembly, homodimer. The cofactor is Ni(2+).

It catalyses the reaction (S)-ureidoglycolate = urea + glyoxylate. It functions in the pathway nitrogen metabolism; (S)-allantoin degradation. In terms of biological role, catalyzes the catabolism of the allantoin degradation intermediate (S)-ureidoglycolate, generating urea and glyoxylate. Involved in the utilization of allantoin as nitrogen source. The polypeptide is Ureidoglycolate lyase (Salmonella typhimurium (strain LT2 / SGSC1412 / ATCC 700720)).